Here is a 299-residue protein sequence, read N- to C-terminus: Bifunctional protein FolD (299 aa).

NADP(+) is bound by residues 168–170 (GRS), Ser-193, and Ile-234.

Belongs to the tetrahydrofolate dehydrogenase/cyclohydrolase family. In terms of assembly, homodimer.

It carries out the reaction (6R)-5,10-methylene-5,6,7,8-tetrahydrofolate + NADP(+) = (6R)-5,10-methenyltetrahydrofolate + NADPH. The enzyme catalyses (6R)-5,10-methenyltetrahydrofolate + H2O = (6R)-10-formyltetrahydrofolate + H(+). The protein operates within one-carbon metabolism; tetrahydrofolate interconversion. Catalyzes the oxidation of 5,10-methylenetetrahydrofolate to 5,10-methenyltetrahydrofolate and then the hydrolysis of 5,10-methenyltetrahydrofolate to 10-formyltetrahydrofolate. This chain is Bifunctional protein FolD, found in Bartonella bacilliformis (strain ATCC 35685 / KC583 / Herrer 020/F12,63).